The following is a 177-amino-acid chain: ATP synthase subunit delta (177 aa).

This sequence belongs to the ATPase delta chain family. In terms of assembly, F-type ATPases have 2 components, F(1) - the catalytic core - and F(0) - the membrane proton channel. F(1) has five subunits: alpha(3), beta(3), gamma(1), delta(1), epsilon(1). F(0) has three main subunits: a(1), b(2) and c(10-14). The alpha and beta chains form an alternating ring which encloses part of the gamma chain. F(1) is attached to F(0) by a central stalk formed by the gamma and epsilon chains, while a peripheral stalk is formed by the delta and b chains.

The protein localises to the cell inner membrane. F(1)F(0) ATP synthase produces ATP from ADP in the presence of a proton or sodium gradient. F-type ATPases consist of two structural domains, F(1) containing the extramembraneous catalytic core and F(0) containing the membrane proton channel, linked together by a central stalk and a peripheral stalk. During catalysis, ATP synthesis in the catalytic domain of F(1) is coupled via a rotary mechanism of the central stalk subunits to proton translocation. In terms of biological role, this protein is part of the stalk that links CF(0) to CF(1). It either transmits conformational changes from CF(0) to CF(1) or is implicated in proton conduction. The sequence is that of ATP synthase subunit delta from Vibrio parahaemolyticus serotype O3:K6 (strain RIMD 2210633).